The primary structure comprises 140 residues: Histone H2B (140 aa).

The segment at 1–47 (MPPKAQKTPTTGGKAPAGKAPVEKKEAGKKTAAPSGEKKKRTKTRKE) is disordered. At lysine 7 the chain carries N6-acetyllysine; alternate. Residue lysine 7 forms a Glycyl lysine isopeptide (Lys-Gly) (interchain with G-Cter in SUMO); alternate linkage. Lysine 14 is modified (N6-acetyllysine). Lysine 24 carries the N6-acetyllysine; alternate modification. Residue lysine 24 forms a Glycyl lysine isopeptide (Lys-Gly) (interchain with G-Cter in SUMO); alternate linkage. Lysine 25 participates in a covalent cross-link: Glycyl lysine isopeptide (Lys-Gly) (interchain with G-Cter in SUMO). Lysine 134 participates in a covalent cross-link: Glycyl lysine isopeptide (Lys-Gly) (interchain with G-Cter in ubiquitin).

This sequence belongs to the histone H2B family. As to quaternary structure, the nucleosome is a histone octamer containing two molecules each of H2A, H2B, H3 and H4 assembled in one H3-H4 heterotetramer and two H2A-H2B heterodimers. The octamer wraps approximately 147 bp of DNA. In terms of processing, monoubiquitinated by BRE1 to form H2BK123ub1. H2BK123ub1 gives a specific tag for epigenetic transcriptional activation and is also prerequisite for H3K4me and H3K79me formation. H2BK123ub1 also modulates the formation of double-strand breaks during meiosis and is a prerequisite for DNA-damage checkpoint activation. Post-translationally, acetylated by GCN5 to form H2BK11ac and H2BK16ac. H2BK16ac can also be formed by ESA1. Acetylation of N-terminal lysines and particularly formation of H2BK11acK16ac has a positive effect on transcription. Sumoylation to form H2BK6su and probably also H2BK16su or H2BK17su, occurs preferentially near the telomeres and represses gene transcription.

It localises to the nucleus. The protein localises to the chromosome. Core component of nucleosome. Nucleosomes wrap and compact DNA into chromatin, limiting DNA accessibility to the cellular machineries which require DNA as a template. Histones thereby play a central role in transcription regulation, DNA repair, DNA replication and chromosomal stability. DNA accessibility is regulated via a complex set of post-translational modifications of histones, also called histone code, and nucleosome remodeling. The sequence is that of Histone H2B (HTB1) from Phaeosphaeria nodorum (strain SN15 / ATCC MYA-4574 / FGSC 10173) (Glume blotch fungus).